The sequence spans 185 residues: Adenylate kinase (185 aa).

8 to 16 (GIPGSGSTT) is an ATP binding site.

The protein belongs to the archaeal adenylate kinase family.

It is found in the cytoplasm. It catalyses the reaction AMP + ATP = 2 ADP. This is Adenylate kinase (adkA) from Methanothermobacter thermautotrophicus (strain ATCC 29096 / DSM 1053 / JCM 10044 / NBRC 100330 / Delta H) (Methanobacterium thermoautotrophicum).